Reading from the N-terminus, the 393-residue chain is Probable acetyl-CoA acyltransferase (393 aa).

The Acyl-thioester intermediate role is filled by cysteine 88. Active-site proton acceptor residues include histidine 349 and cysteine 378.

The protein belongs to the thiolase-like superfamily. Thiolase family.

The protein resides in the cytoplasm. The enzyme catalyses 2 acetyl-CoA = acetoacetyl-CoA + CoA. This chain is Probable acetyl-CoA acyltransferase, found in Staphylococcus aureus (strain Mu50 / ATCC 700699).